The sequence spans 442 residues: Protein bag of marbles (442 aa).

The segment at 201–250 is required for interaction with ubiquitin; sequence FDMPVKSTMPKSLNVRYQLQVLCTKVERFLVQQRRTLEANRHFDFEKYDE. The interval 408 to 442 is disordered; that stretch reads VSMEQPSASEEEFEETEEVPSSPPRHTGRVPRFRS. Residues 416–425 show a composition bias toward acidic residues; it reads SEEEFEETEE. Positions 433-442 are enriched in basic residues; the sequence is HTGRVPRFRS.

Interacts (via central region) with ubiquitin. Interacts (via C-terminus) with otu (via OTU domain); the interaction enhances otu aggregation into amyloid-like structures and enhances its deubiquitinase activity. Together with otu interacts with CycA/cyclin-A (via C-terminus); the interaction stabilizes CycA by promoting and enhancing otu dependent deubiquitination of CycA. Together with otu interacts with Traf6. Part of a complex composed of at least tut, bam and bgcn; complex formation does not require RNA. Interacts (via C-terminus) with bgcn; the interaction is direct and is not disrupted by eIF4A. Interacts with eIF4A (via multiple contacts); the interaction is direct and is not disrupted by bgcn. Interacts (via N-terminus) with tut; the interaction is direct and mediates the interaction between tut and bgcn. As part of the bam-bgcn-tut complex associates with twin; may recruit the CCR4-NOT1 deadenylation complex to mRNA 3'-UTRs to mediate post-transcriptional regulation of expression. Part of a complex composed of at least mei-P26, bam, bgcn and Sxl; this complex is involved in translational repression of nanos mRNA. In terms of processing, ubiquitinated (C-terminal region). In cystoblasts and/or very early cystocytes in testis (at protein level); expression levels are regulated by mei-P26. In cystoblasts and/or very early cystocytes in ovary. Expressed in the gut; expression levels increase with age.

The protein localises to the cytoplasm. Regulatory component of a deubiquitinase complex consisting of bam and otu. The complex deubiquitinates K63-linked polyubiquitinated proteins, antagonizing the ubiquitination activity of Traf6 and regulating the IMD immune signaling pathway. Otu-bam deubiquitinase activity is regulated by Traf6 dependent immune signaling regulation of bam expression levels; this forms a feedback loop that regulates the IMD immune signaling pathway and balances gut immune activity during aging. The complex deubiquitinates and stabilizes CycA/cyclin-A to regulate CycA-dependent differentiation. Required to initiate both male and female gametogenesis. Part of a complex with bgcn involved in 3'-UTR-dependent translational repression of a subset of mRNAs, including those for mei-P26, nanos and shg/E-cadherin. Repression of mei-P26 is targeted by let-7 miRNA. Involved in a regulatory cascade with mei-P26 to control the progression of cystocytes through transit amplification and the switch to spermatocyte differentiation; mei-P26 facilitates bam accumulation, which in turn represses translation of mei-P26. Forms a complex with tut and bgcn involved in 3'-UTR-dependent post-transcriptional repression of several 3'-RNA processing factors, which promotes germline stem cell lineage differentiation and mitosis-to-meiosis transition. The polypeptide is Protein bag of marbles (Drosophila melanogaster (Fruit fly)).